Consider the following 243-residue polypeptide: Orotidine 5'-phosphate decarboxylase (243 aa).

Residues D19, K41, D69–T78, T124, R185, Q194, G214, and R215 contribute to the substrate site. The Proton donor role is filled by K71.

The protein belongs to the OMP decarboxylase family. Type 1 subfamily. As to quaternary structure, homodimer.

It catalyses the reaction orotidine 5'-phosphate + H(+) = UMP + CO2. The protein operates within pyrimidine metabolism; UMP biosynthesis via de novo pathway; UMP from orotate: step 2/2. In terms of biological role, catalyzes the decarboxylation of orotidine 5'-monophosphate (OMP) to uridine 5'-monophosphate (UMP). This chain is Orotidine 5'-phosphate decarboxylase, found in Xanthomonas euvesicatoria pv. vesicatoria (strain 85-10) (Xanthomonas campestris pv. vesicatoria).